Here is a 530-residue protein sequence, read N- to C-terminus: UDP-glucuronosyltransferase 2B31 (530 aa).

An N-terminal signal peptide occupies residues 1–24; the sequence is MSMKWISVLLGLQLSCYFSSGSCG. K136 carries the post-translational modification N6-succinyllysine. N316 is a glycosylation site (N-linked (GlcNAc...) asparagine). Residues 495 to 515 form a helical membrane-spanning segment; it reads IGFLLACVATAIFVTTQCCLF.

It belongs to the UDP-glycosyltransferase family.

Its subcellular location is the microsome membrane. The protein localises to the endoplasmic reticulum membrane. The enzyme catalyses glucuronate acceptor + UDP-alpha-D-glucuronate = acceptor beta-D-glucuronoside + UDP + H(+). In terms of biological role, UDPGTs are of major importance in the conjugation and subsequent elimination of potentially toxic xenobiotics and endogenous compounds. This isozyme has glucuronidating capacity on phenols, opioids, and carboxylic acid-containing drugs. The polypeptide is UDP-glucuronosyltransferase 2B31 (UGT2B31) (Canis lupus familiaris (Dog)).